A 99-amino-acid chain; its full sequence is Aspartyl/glutamyl-tRNA(Asn/Gln) amidotransferase subunit C (99 aa).

It belongs to the GatC family. As to quaternary structure, heterotrimer of A, B and C subunits.

The catalysed reaction is L-glutamyl-tRNA(Gln) + L-glutamine + ATP + H2O = L-glutaminyl-tRNA(Gln) + L-glutamate + ADP + phosphate + H(+). It catalyses the reaction L-aspartyl-tRNA(Asn) + L-glutamine + ATP + H2O = L-asparaginyl-tRNA(Asn) + L-glutamate + ADP + phosphate + 2 H(+). Allows the formation of correctly charged Asn-tRNA(Asn) or Gln-tRNA(Gln) through the transamidation of misacylated Asp-tRNA(Asn) or Glu-tRNA(Gln) in organisms which lack either or both of asparaginyl-tRNA or glutaminyl-tRNA synthetases. The reaction takes place in the presence of glutamine and ATP through an activated phospho-Asp-tRNA(Asn) or phospho-Glu-tRNA(Gln). The protein is Aspartyl/glutamyl-tRNA(Asn/Gln) amidotransferase subunit C of Variovorax paradoxus (strain S110).